The following is a 418-amino-acid chain: L-glutamine:2-deoxy-scyllo-inosose aminotransferase (418 aa).

Lys192 is modified (N6-(pyridoxal phosphate)lysine).

The protein belongs to the DegT/DnrJ/EryC1 family. L-glutamine:2-deoxy-scyllo-inosose/scyllo-inosose aminotransferase subfamily. Requires pyridoxal 5'-phosphate as cofactor.

The enzyme catalyses 2-deoxy-L-scyllo-inosose + L-glutamine = 2-deoxy-scyllo-inosamine + 2-oxoglutaramate. It carries out the reaction 3-amino-2,3-dideoxy-scyllo-inosose + L-glutamine = 2-deoxystreptamine + 2-oxoglutaramate. Its pathway is metabolic intermediate biosynthesis; 2-deoxystreptamine biosynthesis; 2-deoxystreptamine from D-glucose 6-phosphate: step 2/4. It participates in metabolic intermediate biosynthesis; 2-deoxystreptamine biosynthesis; 2-deoxystreptamine from D-glucose 6-phosphate: step 4/4. The protein operates within antibiotic biosynthesis; butirosin biosynthesis. Its function is as follows. Catalyzes the PLP-dependent transamination of 2-deoxy-scyllo-inosose (2-DOI) to form 2-deoxy-scyllo-inosamine (2-DOIA) using L-glutamine as the amino donor. Also catalyzes the transamination of 3-amino-2,3-dideoxy-scyllo-inosose (keto-2-DOIA) into 2-deoxystreptamine (2-DOS). The polypeptide is L-glutamine:2-deoxy-scyllo-inosose aminotransferase (btrR) (Niallia circulans (Bacillus circulans)).